The following is a 496-amino-acid chain: Glutamyl-tRNA(Gln) amidotransferase subunit A (496 aa).

Active-site charge relay system residues include Lys75 and Ser150. Ser174 (acyl-ester intermediate) is an active-site residue.

The protein belongs to the amidase family. GatA subfamily. As to quaternary structure, heterotrimer of A, B and C subunits.

The catalysed reaction is L-glutamyl-tRNA(Gln) + L-glutamine + ATP + H2O = L-glutaminyl-tRNA(Gln) + L-glutamate + ADP + phosphate + H(+). Allows the formation of correctly charged Gln-tRNA(Gln) through the transamidation of misacylated Glu-tRNA(Gln) in organisms which lack glutaminyl-tRNA synthetase. The reaction takes place in the presence of glutamine and ATP through an activated gamma-phospho-Glu-tRNA(Gln). This is Glutamyl-tRNA(Gln) amidotransferase subunit A from Burkholderia lata (strain ATCC 17760 / DSM 23089 / LMG 22485 / NCIMB 9086 / R18194 / 383).